The following is a 288-amino-acid chain: Diaminopimelate epimerase (288 aa).

Residues Asn-14 and Asn-67 each contribute to the substrate site. Cys-76 serves as the catalytic Proton donor. Residues 77-78, Asn-166, Asn-199, and 217-218 each bind substrate; these read GN and ER. Catalysis depends on Cys-226, which acts as the Proton acceptor. Position 227-228 (227-228) interacts with substrate; that stretch reads GT.

This sequence belongs to the diaminopimelate epimerase family. As to quaternary structure, homodimer.

Its subcellular location is the cytoplasm. The enzyme catalyses (2S,6S)-2,6-diaminopimelate = meso-2,6-diaminopimelate. It participates in amino-acid biosynthesis; L-lysine biosynthesis via DAP pathway; DL-2,6-diaminopimelate from LL-2,6-diaminopimelate: step 1/1. Functionally, catalyzes the stereoinversion of LL-2,6-diaminopimelate (L,L-DAP) to meso-diaminopimelate (meso-DAP), a precursor of L-lysine and an essential component of the bacterial peptidoglycan. The sequence is that of Diaminopimelate epimerase from Bacillus cereus (strain 03BB102).